Here is a 484-residue protein sequence, read N- to C-terminus: Regulator of G-protein signaling 9 (484 aa).

One can recognise a DEP domain in the interval 30-105 (PDTGVRVQNQ…PDSSLYRFQT (76 aa)). Positions 219–280 (VVSVRKEIMY…ITDDTQFWDL (62 aa)) constitute a G protein gamma domain. The region spanning 299–414 (NFSELIRDPK…LKSPIYKEML (116 aa)) is the RGS domain. The tract at residues 460 to 484 (TTVDITQVMSKLDRRSQLRKEPPPK) is disordered. Residues 470-484 (KLDRRSQLRKEPPPK) are compositionally biased toward basic and acidic residues.

Heterodimer with GNB5. Interacts with RGS7BP, leading to regulate the subcellular location of the heterodimer formed with GNB5. Component of the RGS9-1-Gbeta5 complex composed of RGS9 (RGS9-1), Gbeta5 (GNB5) and RGS9BP. Interacts with PDE6G and GNAT1. Phosphorylation is decreased by light exposition. Photoreceptor outer segments.

It localises to the membrane. Inhibits signal transduction by increasing the GTPase activity of G protein alpha subunits thereby driving them into their inactive GDP-bound form. Binds to GNAT1. Involved in phototransduction; key element in the recovery phase of visual transduction. This chain is Regulator of G-protein signaling 9 (RGS9), found in Bos taurus (Bovine).